Consider the following 152-residue polypeptide: Putative toxin MJ1304 (152 aa).

The 121-residue stretch at 15–135 (IKRAEEDLEV…EECLKDAENV (121 aa)) folds into the HEPN domain.

In terms of biological role, putative toxin component of a putative type VII toxin-antitoxin (TA) system. Its cognate antitoxin might be MJ1305. The chain is Putative toxin MJ1304 from Methanocaldococcus jannaschii (strain ATCC 43067 / DSM 2661 / JAL-1 / JCM 10045 / NBRC 100440) (Methanococcus jannaschii).